We begin with the raw amino-acid sequence, 751 residues long: Lanosterol synthase erg7A (751 aa).

Residues M1–N22 form a disordered region. The stretch at A147–G189 is one PFTB 1 repeat. D481 functions as the Proton donor in the catalytic mechanism. PFTB repeat units lie at residues L508–Y553, K585–G625, and A634–A675.

The protein belongs to the terpene cyclase/mutase family.

It is found in the lipid droplet. The protein localises to the endoplasmic reticulum membrane. The catalysed reaction is (S)-2,3-epoxysqualene = lanosterol. It participates in steroid metabolism; ergosterol biosynthesis. Functionally, lanosterol synthase; part of the third module of ergosterol biosynthesis pathway that includes the late steps of the pathway. ERG7A and ERG7B catalyze the cyclization of (S)-2,3 oxidosqualene to lanosterol, a reaction that forms the sterol core. The third module or late pathway involves the ergosterol synthesis itself through consecutive reactions that mainly occur in the endoplasmic reticulum (ER) membrane. Firstly, the squalene synthase erg9 catalyzes the condensation of 2 farnesyl pyrophosphate moieties to form squalene, which is the precursor of all steroids. Squalene synthase is crucial for balancing the incorporation of farnesyl diphosphate (FPP) into sterol and nonsterol isoprene synthesis. Secondly, squalene is converted into lanosterol by the consecutive action of the squalene epoxidase erg1 and the lanosterol synthase erg7. Then, the delta(24)-sterol C-methyltransferase erg6 methylates lanosterol at C-24 to produce eburicol. Eburicol is the substrate of the sterol 14-alpha demethylase encoded by cyp51A and cyp51B, to yield 4,4,24-trimethyl ergosta-8,14,24(28)-trienol. The C-14 reductase erg24 then reduces the C14=C15 double bond which leads to 4,4-dimethylfecosterol. A sequence of further demethylations at C-4, involving the C-4 demethylation complex containing the C-4 methylsterol oxidases erg25A or erg25B, the sterol-4-alpha-carboxylate 3-dehydrogenase erg26 and the 3-keto-steroid reductase erg27, leads to the production of fecosterol via 4-methylfecosterol. The C-8 sterol isomerase erg2 then catalyzes the reaction which results in unsaturation at C-7 in the B ring of sterols and thus converts fecosterol to episterol. The sterol-C5-desaturase erg3B then catalyzes the introduction of a C-5 double bond in the B ring to produce 5-dehydroepisterol. The 2 other sterol-C5-desaturases, erg3A and erg3C, seem to be less important in ergosterol biosynthesis. The C-22 sterol desaturase erg5 further converts 5-dehydroepisterol into ergosta-5,7,22,24(28)-tetraen-3beta-ol by forming the C-22(23) double bond in the sterol side chain. Finally, ergosta-5,7,22,24(28)-tetraen-3beta-ol is substrate of the C-24(28) sterol reductases erg4A and erg4B to produce ergosterol. Possible alternative sterol biosynthetic pathways might exist from fecosterol to ergosterol, depending on the activities of the erg3 isoforms. The sequence is that of Lanosterol synthase erg7A from Aspergillus fumigatus (strain ATCC MYA-4609 / CBS 101355 / FGSC A1100 / Af293) (Neosartorya fumigata).